The following is a 385-amino-acid chain: uncharacterized protein (385 aa).

The next 8 membrane-spanning stretches (helical) occupy residues 17–37 (ILII…FIFT), 72–92 (TELM…WFLL), 107–127 (WILK…KCIT), 155–175 (ICLI…FYII), 191–211 (WIQA…LVLL), 295–315 (AFPS…FYFL), 326–346 (ITLL…IVVN), and 354–374 (ITFT…FNSF).

Its subcellular location is the membrane. This is an uncharacterized protein from Mycoplasma capricolum subsp. capricolum (strain California kid / ATCC 27343 / NCTC 10154).